The sequence spans 372 residues: Queuine tRNA-ribosyltransferase (372 aa).

D92 (proton acceptor) is an active-site residue. Substrate is bound by residues 92–96 (DSGGF), D146, Q188, and G215. The tract at residues 246 to 252 (GIGTLRE) is RNA binding. The active-site Nucleophile is D265. The RNA binding; important for wobble base 34 recognition stretch occupies residues 270–274 (TRLGR). Residues C303, C305, C308, and H334 each coordinate Zn(2+).

It belongs to the queuine tRNA-ribosyltransferase family. Homodimer. Within each dimer, one monomer is responsible for RNA recognition and catalysis, while the other monomer binds to the replacement base PreQ1. Requires Zn(2+) as cofactor.

It catalyses the reaction 7-aminomethyl-7-carbaguanine + guanosine(34) in tRNA = 7-aminomethyl-7-carbaguanosine(34) in tRNA + guanine. The protein operates within tRNA modification; tRNA-queuosine biosynthesis. Catalyzes the base-exchange of a guanine (G) residue with the queuine precursor 7-aminomethyl-7-deazaguanine (PreQ1) at position 34 (anticodon wobble position) in tRNAs with GU(N) anticodons (tRNA-Asp, -Asn, -His and -Tyr). Catalysis occurs through a double-displacement mechanism. The nucleophile active site attacks the C1' of nucleotide 34 to detach the guanine base from the RNA, forming a covalent enzyme-RNA intermediate. The proton acceptor active site deprotonates the incoming PreQ1, allowing a nucleophilic attack on the C1' of the ribose to form the product. After dissociation, two additional enzymatic reactions on the tRNA convert PreQ1 to queuine (Q), resulting in the hypermodified nucleoside queuosine (7-(((4,5-cis-dihydroxy-2-cyclopenten-1-yl)amino)methyl)-7-deazaguanosine). The protein is Queuine tRNA-ribosyltransferase of Synechococcus sp. (strain CC9311).